A 743-amino-acid chain; its full sequence is Conserved oligomeric Golgi complex subunit 8 (743 aa).

2 disordered regions span residues 549 to 672 (EDGP…TEPE) and 704 to 743 (TQDDPIEEEEGWGWGDDDGEEQEISSKEVESPKEKCKKDD). Basic and acidic residues-rich tracts occupy residues 563 to 581 (ESVKEQETTSELEKKHGTD), 594 to 621 (PVKEHETTSELTKEQEPAFEPEKLHETP), 633 to 647 (SEAKAAHNPEAHLEL), and 654 to 664 (QEIREQEHKEV). Residues 704–726 (TQDDPIEEEEGWGWGDDDGEEQE) show a composition bias toward acidic residues. The span at 727 to 743 (ISSKEVESPKEKCKKDD) shows a compositional bias: basic and acidic residues.

Belongs to the COG8 family. Component of the conserved oligomeric Golgi complex which is composed of eight different subunits and is required for normal Golgi morphology and localization.

The protein resides in the golgi apparatus membrane. Required for normal Golgi function. This is Conserved oligomeric Golgi complex subunit 8 (cogc-8) from Caenorhabditis elegans.